The sequence spans 388 residues: MSQDLLPGVTGVLALADGAILQGVGCGAVGDAVGEVCFNTAMTGYQEILTDPSYMAQIVAFTFPHVGNVGVNGEDVEQITGVAETAARGALFRDVPTVQANWRADGDFDAWMKARGVVGLAGVDTRALTRKIRETGMPHGVIAHSPDGQFDLAALVAKAKAWAGLEGLDLAKDASTTQTFTWDEGLWSWPEGYAKLDKPKYEVVVIDYGVKRNILRALAHVGARATVVPASTSAEDILARNPDGVMLSNGPGDPAATGQYAVPEIQKLVASGKPVFGICLGHQMLALALGAKTVKMEQGHHGANHPVKDLTTGKVEIVSMNHGFTVDTASLPAPVKETHVSLFDGTNAGIALDGKPVFSVQHHPEASPGPTDSLYLFERFAGLMDAAK.

The segment at 1–198 is CPSase; the sequence is MSQDLLPGVT…WPEGYAKLDK (198 aa). 3 residues coordinate L-glutamine: Ser-53, Gly-250, and Gly-252. One can recognise a Glutamine amidotransferase type-1 domain in the interval 202–388; it reads EVVVIDYGVK…RFAGLMDAAK (187 aa). Cys-279 (nucleophile) is an active-site residue. 5 residues coordinate L-glutamine: Leu-280, Gln-283, Asn-321, Gly-323, and Phe-324. Catalysis depends on residues His-363 and Glu-365.

Belongs to the CarA family. Composed of two chains; the small (or glutamine) chain promotes the hydrolysis of glutamine to ammonia, which is used by the large (or ammonia) chain to synthesize carbamoyl phosphate. Tetramer of heterodimers (alpha,beta)4.

It carries out the reaction hydrogencarbonate + L-glutamine + 2 ATP + H2O = carbamoyl phosphate + L-glutamate + 2 ADP + phosphate + 2 H(+). It catalyses the reaction L-glutamine + H2O = L-glutamate + NH4(+). It functions in the pathway amino-acid biosynthesis; L-arginine biosynthesis; carbamoyl phosphate from bicarbonate: step 1/1. The protein operates within pyrimidine metabolism; UMP biosynthesis via de novo pathway; (S)-dihydroorotate from bicarbonate: step 1/3. In terms of biological role, small subunit of the glutamine-dependent carbamoyl phosphate synthetase (CPSase). CPSase catalyzes the formation of carbamoyl phosphate from the ammonia moiety of glutamine, carbonate, and phosphate donated by ATP, constituting the first step of 2 biosynthetic pathways, one leading to arginine and/or urea and the other to pyrimidine nucleotides. The small subunit (glutamine amidotransferase) binds and cleaves glutamine to supply the large subunit with the substrate ammonia. The polypeptide is Carbamoyl phosphate synthase small chain (Caulobacter vibrioides (strain ATCC 19089 / CIP 103742 / CB 15) (Caulobacter crescentus)).